The sequence spans 180 residues: Pituitary tumor-transforming gene 1 protein-interacting protein (180 aa).

A signal peptide spans 1–32 (MAPGVARGPTPYWRLRLGGAALLLLLIPVAAA). Residues 33–96 (QEPPGAACSQ…RWGVCWVNFE (64 aa)) are Extracellular-facing. The PSI domain occupies 39-92 (ACSQNTNKTCEECLKNVSCLWCNTNKACLDYPVTSVLPPASLCKLSSARWGVCW). N-linked (GlcNAc...) asparagine glycosylation is found at Asn-45 and Asn-54. Residues 97–117 (ALIITMSVVGGTLLLGIAICC) form a helical membrane-spanning segment. At 118 to 180 (CCCCRRKRSR…ENPYARFENN (63 aa)) the chain is on the cytoplasmic side. Positions 130 to 165 (DRSEEKAMREREERRIRQEERRAEMKTRHDEIRKKY) form a coiled coil. A disordered region spans residues 131–157 (RSEEKAMREREERRIRQEERRAEMKTR). Tyr-174 is subject to Phosphotyrosine.

Interacts with PTTG1. Ubiquitous.

It is found in the membrane. The protein resides in the cytoplasm. It localises to the nucleus. Its function is as follows. May facilitate PTTG1 nuclear translocation. This is Pituitary tumor-transforming gene 1 protein-interacting protein (PTTG1IP) from Homo sapiens (Human).